A 262-amino-acid chain; its full sequence is MGRGPKKHLKRLAAPSHWMLXKLSGTYAPRPSAGPHXLRESLPLXVFLRNRLXYALCGREVKAIMMQQHVQVVGKVRTDTTYPAGFMDVITLEATNEHFRLAYDVKGKFAVHRISAEEAVYKLGKVKKVQLGKKGVPYVVTHDGRTIRYPDPLIRANDTVKIDLATGKIXSFIKFDTGRLVMVTGGRNLGRVGVIVHREKLEGGFDLVHIKDALENTFVTRLSNVFVIGTEAGKPWVSLPKGKGIKLSISEERDRRXAQQGL.

Residues 42-105 (LPLXVFLRNR…NEHFRLAYDV (64 aa)) form the S4 RNA-binding domain.

Belongs to the eukaryotic ribosomal protein eS4 family.

This is Small ribosomal subunit protein eS4 (RPS4) from Candida albicans (Yeast).